The chain runs to 638 residues: MSKTPLLDTIRTPEDLRKLRVDQVQQVADELRQETIDAVSVTGGHFGAGLGVVELTTAIHYVFDTPRDRLIWDVGHQAYPHKILTGRRDRIRTLRTAGGLSGFTKRTESDYDPFGAAHSSTSISAGLGMAVARDLAGGNNNVIAVIGDGSISAGMAYEAMNNAGAMNSRLIVILNDNNMSIAPPVGAMSAYLSRLYSGKTYRSLREAGKQIGKHLPKLIADRAARAEEYSRGFMMGGGTLFEELGFYYVGPIDGHNLDHLLPILQNVRDAETGPFLIHVVTQKGKGYAPAEAASDKYHAVVKFDIATGTQAKAKSNAPSYQNVFGQSLVKEAAKDDKIVGITAAMPSGTGIDIFEKAFPARTFDVGIAEQHAVTFAAGLATEGYKPFCAIYSTFLQRAYDQVVHDVALQSLPVRFAIDRAGLVGADGATHAGSFDNAYLGCLPNMVIMAASDEAELVHMVATQVAINDRPSALRYPRGEGRGVEMPDVGVPLEIGKGRVIRQGNKVALLSFGTRLAECEKAAEELAALGLSTTVADARFMKPLDVDLVLKLANEHEILITIEEGSIGGFGTHVMQTLAEHGKLDGEVKMRAMVLPDVFLDHDTPTAMYANAGLDAKAIVKKVFEALGKEHKAETVKLA.

Residues His76 and 117-119 (AHS) each bind thiamine diphosphate. A Mg(2+)-binding site is contributed by Asp148. Thiamine diphosphate-binding positions include 149-150 (GS), Asn177, Tyr287, and Glu369. Asn177 serves as a coordination point for Mg(2+).

This sequence belongs to the transketolase family. DXPS subfamily. In terms of assembly, homodimer. It depends on Mg(2+) as a cofactor. Requires thiamine diphosphate as cofactor.

The catalysed reaction is D-glyceraldehyde 3-phosphate + pyruvate + H(+) = 1-deoxy-D-xylulose 5-phosphate + CO2. Its pathway is metabolic intermediate biosynthesis; 1-deoxy-D-xylulose 5-phosphate biosynthesis; 1-deoxy-D-xylulose 5-phosphate from D-glyceraldehyde 3-phosphate and pyruvate: step 1/1. Its function is as follows. Catalyzes the acyloin condensation reaction between C atoms 2 and 3 of pyruvate and glyceraldehyde 3-phosphate to yield 1-deoxy-D-xylulose-5-phosphate (DXP). This Rhodopseudomonas palustris (strain BisB5) protein is 1-deoxy-D-xylulose-5-phosphate synthase.